Here is a 1253-residue protein sequence, read N- to C-terminus: Elongator complex protein 1 (1253 aa).

The interval 830-1253 is mediates dimerization; it reads VDVNMLFDHA…KPFEKLSILI (424 aa). Polar residues predominate over residues 1126–1141; sequence YTKSSNSSKMTRNTSK. A disordered region spans residues 1126-1153; the sequence is YTKSSNSSKMTRNTSKNNRRLERKRARG. The interval 1137–1155 is required for binding to tRNA; that stretch reads RNTSKNNRRLERKRARGKK. Positions 1142 to 1153 are enriched in basic residues; sequence NNRRLERKRARG.

The protein belongs to the ELP1/IKA1 family. In terms of assembly, homodimer. Component of the elongator complex.

Its subcellular location is the cytoplasm. It participates in tRNA modification; 5-methoxycarbonylmethyl-2-thiouridine-tRNA biosynthesis. Functionally, component of the elongator complex, a multiprotein complex which is required for multiple tRNA modifications, including mcm5U (5-methoxycarbonylmethyl uridine), mcm5s2U (5-methoxycarbonylmethyl-2-thiouridine), and ncm5U (5-carbamoylmethyl uridine). The elongator complex catalyzes formation of carboxymethyluridine in the wobble base at position 34 in tRNAs. ELP1 binds to tRNA, mediating interaction of the elongator complex with tRNA. In Schizosaccharomyces pombe (strain 972 / ATCC 24843) (Fission yeast), this protein is Elongator complex protein 1.